A 414-amino-acid chain; its full sequence is Lysosome-associated membrane glycoprotein 1 (414 aa).

Positions 1–18 (MGGAARAVLLGFLQASSS) are cleaved as a signal peptide. A first lumenal domain region spans residues 19–181 (FDVRDSTGKV…SANKTECRED (163 aa)). At 19–379 (FDVRDSTGKV…EECQLDENNM (361 aa)) the chain is on the lumenal side. Cys29 and Cys67 are disulfide-bonded. Asn33, Asn58, Asn71, Asn90, Asn108, Asn117, Asn154, Asn159, Asn168, and Asn174 each carry an N-linked (GlcNAc...) asparagine glycan. A disulfide bridge connects residues Cys142 and Cys178. Positions 182–224 (MVSTTTVAPTTPKHATSQVPTTSPAPTAAPSSPAVGKYNVTGA) are hinge. Residues 186–213 (TTVAPTTPKHATSQVPTTSPAPTAAPSS) are disordered. Residues 196–213 (ATSQVPTTSPAPTAAPSS) show a composition bias toward low complexity. Asn220, Asn225, Asn238, Asn259, Asn289, Asn301, and Asn319 each carry an N-linked (GlcNAc...) asparagine glycan. The interval 225–379 (NGTCVLASMG…EECQLDENNM (155 aa)) is second lumenal domain. Cys228 and Cys266 are oxidised to a cystine. Cysteines 335 and 372 form a disulfide. The helical transmembrane segment at 380–403 (LIPIIVGAALAGLVLIVLIAYLIG) threads the bilayer. The Cytoplasmic portion of the chain corresponds to 404-414 (RKRSHAGYQTI).

The protein belongs to the LAMP family.

The protein localises to the lysosome membrane. Its subcellular location is the endosome membrane. The protein resides in the late endosome membrane. It localises to the cell membrane. It is found in the cytolytic granule membrane. Functionally, lysosomal membrane glycoprotein which plays an important role in lysosome biogenesis, lysosomal pH regulation, autophagy and cholesterol homeostasis. (Microbial infection) Plays an essential role in efficient replication and spread of Marek's disease virus, by facilitating viral cell-to-cell spread. The sequence is that of Lysosome-associated membrane glycoprotein 1 (LAMP1) from Gallus gallus (Chicken).